A 206-amino-acid polypeptide reads, in one-letter code: Ribonuclease HII (206 aa).

The 189-residue stretch at 18–206 (GRVAGVDEVG…PVREWLEANS (189 aa)) folds into the RNase H type-2 domain. Asp-24, Glu-25, and Asp-116 together coordinate a divalent metal cation.

It belongs to the RNase HII family. Mn(2+) serves as cofactor. The cofactor is Mg(2+).

The protein resides in the cytoplasm. It carries out the reaction Endonucleolytic cleavage to 5'-phosphomonoester.. Its function is as follows. Endonuclease that specifically degrades the RNA of RNA-DNA hybrids. The sequence is that of Ribonuclease HII from Shewanella amazonensis (strain ATCC BAA-1098 / SB2B).